Here is a 523-residue protein sequence, read N- to C-terminus: MSPAGCSHVNSFKVENWRQNLRVIYQCFVWSGTPETRKRKAKSCVCHMCGAHLNRLHSCLYCVYFGCFTKKHIHEHAKNKRHNLAIDLLYGGIYCFMCQDYIYDKDMEQVAKEEQRKAWKLQVFSPALVSPYQYTMTGVGEKYSTWEPTKRELELLQHNPKRRKITTNCTIGLRGLINLGNTCFMNCIVQALTHTPLLRDFFLSDRHKCEMQSPNSCLVCEMSTLFQEFYSGHRSPHIPYRLLHLVWTHARHLAGYEQQDAHEFLIAALDVLHRHCKGDDNGKKANNPNHCNCIIDQIFTGGLQSDVTCQVCHGVSTTIDPFWDISLDLPGSSTPFWPLSPGSDAGVVNGESHVSGTTTLTDCLRRFTRPEHLGSSAKIKCSGCHSYQESTKQLTMKKLPIVACFHLKRFEHSAKLRRKITTYVSFPLELDMMPFMASSKESRMNGQYQQPSDSLHNDNKYSLFAVVNHQGTLESGHYTSFIRQHKDQWFKCDDAIITKASIKDVIDSEGYLLFYHKQFLEYE.

Residues 4-121 form a UBP-type zinc finger; sequence AGCSHVNSFK…KEEQRKAWKL (118 aa). Zn(2+) is bound by residues Cys-6, His-8, Cys-46, Cys-49, Cys-59, Cys-62, Cys-67, His-72, His-76, His-82, Cys-95, and Cys-98. Residues 174–518 form the USP domain; the sequence is RGLINLGNTC…EGYLLFYHKQ (345 aa). The active-site Nucleophile is Cys-183. Catalysis depends on His-477, which acts as the Proton acceptor.

This sequence belongs to the peptidase C19 family. UBP8 subfamily. In terms of assembly, component of some SAGA transcription coactivator-HAT complexes.

It is found in the nucleus. It carries out the reaction Thiol-dependent hydrolysis of ester, thioester, amide, peptide and isopeptide bonds formed by the C-terminal Gly of ubiquitin (a 76-residue protein attached to proteins as an intracellular targeting signal).. Functionally, histone deubiquitinating component of the transcription regulatory histone acetylation (HAT) complex SAGA. Catalyzes the deubiquitination of both histones H2A and H2B, thereby acting as a coactivator. Recruited to specific gene promoters by activators, where it is required for transcription. In Xenopus laevis (African clawed frog), this protein is Ubiquitin carboxyl-terminal hydrolase 22-B (usp22-b).